Here is a 101-residue protein sequence, read N- to C-terminus: Small ribosomal subunit protein uS14 (101 aa).

Belongs to the universal ribosomal protein uS14 family. As to quaternary structure, part of the 30S ribosomal subunit. Contacts proteins S3 and S10.

Functionally, binds 16S rRNA, required for the assembly of 30S particles and may also be responsible for determining the conformation of the 16S rRNA at the A site. The polypeptide is Small ribosomal subunit protein uS14 (Buchnera aphidicola subsp. Schizaphis graminum (strain Sg)).